We begin with the raw amino-acid sequence, 473 residues long: MSPQTETKASVGFKAGVKDYKLNYYTPEYETKDTDILAAFRVTPQPGVPPEEAGASVAAESSTGTWTTVWTDGLTSLDRYKGRCYHIEPVAGEENQYIAYVAYPLDLFEEGSVTNMFTSIVGNVFGFKALRALRLEDLRIPNAYIKTFQGPPHGIQVERDKLNKYGRPLLGCTIKPKLGLSAKNYGRAVYECLRGGLDFTKDDENVNSQPFMRWRDRFLFCAEAIFKSQAETGEIKGHYLNATAGTCEEMMKRAVFARELGVPIVMHDYLTGGFTANTSLAHYCRDNGLLLHIHRAMHAVIDRQKNHGMHFRVLAKALRLSGGDHVHSGTVVGKLEGERDITLGFVDLLRDDFVEKDRSRGIYFTQDWVSLPGVLPVASGGIHVWHMPALTEIFGDDSVLQFGGGTLGHPWGNAPGAVANRVALEACVKARNEGRDLAREGNEIIREASKWSPELAAACEVWKEIKFEFPAMD.

A propeptide spanning residues Met-1 to Ser-2 is cleaved from the precursor. Pro-3 is modified (N-acetylproline). At Lys-14 the chain carries N6,N6,N6-trimethyllysine. Asn-123 and Thr-173 together coordinate substrate. The active-site Proton acceptor is the Lys-175. Lys-177 serves as a coordination point for substrate. Mg(2+) is bound by residues Lys-201, Asp-203, and Glu-204. Lys-201 bears the N6-carboxylysine mark. His-294 (proton acceptor) is an active-site residue. Positions 295, 327, and 379 each coordinate substrate.

Belongs to the RuBisCO large chain family. Type I subfamily. As to quaternary structure, heterohexadecamer of 8 large chains and 8 small chains; disulfide-linked. The disulfide link is formed within the large subunit homodimers. It depends on Mg(2+) as a cofactor. Post-translationally, the disulfide bond which can form in the large chain dimeric partners within the hexadecamer appears to be associated with oxidative stress and protein turnover.

The protein resides in the plastid. It is found in the chloroplast. The enzyme catalyses 2 (2R)-3-phosphoglycerate + 2 H(+) = D-ribulose 1,5-bisphosphate + CO2 + H2O. It catalyses the reaction D-ribulose 1,5-bisphosphate + O2 = 2-phosphoglycolate + (2R)-3-phosphoglycerate + 2 H(+). RuBisCO catalyzes two reactions: the carboxylation of D-ribulose 1,5-bisphosphate, the primary event in carbon dioxide fixation, as well as the oxidative fragmentation of the pentose substrate in the photorespiration process. Both reactions occur simultaneously and in competition at the same active site. This is Ribulose bisphosphate carboxylase large chain from Vigna unguiculata (Cowpea).